The primary structure comprises 245 residues: Fibroblast growth factor-binding protein 3 (245 aa).

Positions Met1–Gly28 are cleaved as a signal peptide. Residues Ala33–Phe52 form a disordered region. 2 disulfide bridges follow: Cys60–Cys81 and Cys91–Cys125. Residues Cys136 to Gly216 are disordered. Over residues Arg170–Ser180 the composition is skewed to low complexity. Cysteines 228 and 236 form a disulfide.

This sequence belongs to the fibroblast growth factor-binding protein family. As to quaternary structure, interacts with FGF2. In terms of tissue distribution, in the adult, highly expressed in brain with lower levels in ovary. In the embryo, highest levels are found in the brain and spinal cord at 14 dpc and expression is almost completely restricted to the brain by 18 dpc. In the adult and postnatal brain, highly expressed in the orbitofrontal cortex where it is concentrated primarily in differentiated neurons.

The protein resides in the secreted. In terms of biological role, heparin-binding protein which binds to FGF2, prevents binding of FGF2 to heparin and probably inhibits immobilization of FGF2 on extracellular matrix glycosaminoglycans, allowing its release and subsequent activation of FGFR signaling which leads to increased vascular permeability. The sequence is that of Fibroblast growth factor-binding protein 3 (Fgfbp3) from Mus musculus (Mouse).